A 571-amino-acid polypeptide reads, in one-letter code: L-erythrulose 1-kinase (571 aa).

The 325-residue stretch at 7–331 (SPDDFADEAV…WTAPVETPAY (325 aa)) folds into the DhaK domain. Histidine 217 (tele-hemiaminal-histidine intermediate) is an active-site residue. Residues 367-567 (RNIVAVLETF…FAMLMKALGE (201 aa)) form the DhaL domain. ATP contacts are provided by residues 396–402 (DGDHGQG), 442–443 (TS), glycine 484, arginine 539, and 552–554 (DPG).

The catalysed reaction is L-erythrulose + ATP = L-erythrulose 1-phosphate + ADP + H(+). It functions in the pathway carbohydrate metabolism; L-threitol degradation. Functionally, kinase that has a preference for L-erythrulose, producing L-erythrulose-1P. Involved in the degradation pathway of L-threitol, that allows M.smegmatis to grow on this compound as the sole carbon source. Is also able to phosphorylate D-erythrulose and dihydroxyacetone in vitro. The chain is L-erythrulose 1-kinase from Mycolicibacterium smegmatis (strain ATCC 700084 / mc(2)155) (Mycobacterium smegmatis).